The sequence spans 189 residues: Probable nicotinate-nucleotide adenylyltransferase (189 aa).

This sequence belongs to the NadD family.

The catalysed reaction is nicotinate beta-D-ribonucleotide + ATP + H(+) = deamido-NAD(+) + diphosphate. Its pathway is cofactor biosynthesis; NAD(+) biosynthesis; deamido-NAD(+) from nicotinate D-ribonucleotide: step 1/1. Functionally, catalyzes the reversible adenylation of nicotinate mononucleotide (NaMN) to nicotinic acid adenine dinucleotide (NaAD). This is Probable nicotinate-nucleotide adenylyltransferase from Hydrogenobaculum sp. (strain Y04AAS1).